The following is a 674-amino-acid chain: Metal-nicotianamine transporter YSL2 (674 aa).

The segment at 1–29 (MEAAAPEIERCDAGDVESDHDGAAAAAER) is disordered. A compositionally biased stretch (basic and acidic residues) spans 7–22 (EIERCDAGDVESDHDG). 14 consecutive transmembrane segments (helical) span residues 41 to 61 (GMVA…KLAL), 64 to 84 (GIIP…LRGW), 118 to 138 (CAVA…LLAL), 162 to 182 (GVGW…LNLL), 224 to 244 (GFLN…FYTG), 283 to 303 (LVNL…WPLI), 329 to 349 (FMCV…VTGI), 392 to 412 (LAYA…PIMF), 420 to 440 (VVVA…GTGL), 452 to 472 (IALF…AGLV), 506 to 526 (VGQA…FLLF), 559 to 579 (SALP…SVLI), 604 to 624 (FLVG…VFAW), and 633 to 653 (ALLV…WMFP).

The protein belongs to the YSL (TC 2.A.67.2) family. As to expression, expressed in phloem cells of vascular bundles in leaves and leaf sheaths. Expressed at low levels in phloem companion cells in the central cylinder of roots, but not in the epidermal or cortical cells.

It localises to the cell membrane. Functionally, involved in the phloem transport of iron and manganese and their translocation into the grain. Transports iron- and manganese-nicotianamine chelates, but not iron-phytosiderophore. This is Metal-nicotianamine transporter YSL2 (YSL2) from Oryza sativa subsp. japonica (Rice).